Consider the following 265-residue polypeptide: Undecaprenyl-diphosphatase (265 aa).

The next 7 helical transmembrane spans lie at I41–F61, L75–I95, Y104–I124, L137–V157, Y180–T200, G215–L235, and Y244–I264.

It belongs to the UppP family.

The protein localises to the cell membrane. It catalyses the reaction di-trans,octa-cis-undecaprenyl diphosphate + H2O = di-trans,octa-cis-undecaprenyl phosphate + phosphate + H(+). Catalyzes the dephosphorylation of undecaprenyl diphosphate (UPP). The protein is Undecaprenyl-diphosphatase of Saccharolobus islandicus (strain Y.N.15.51 / Yellowstone #2) (Sulfolobus islandicus).